We begin with the raw amino-acid sequence, 460 residues long: Keratin, type I cytoskeletal 27 (460 aa).

Positions 1-83 (MSVRFSSASR…GNEHGLLSGN (83 aa)) are head. Residues 84–119 (EKVTMQNLNDRLASYLDNVRALEEANADLEQKIKGW) are coil 1A. The IF rod domain maps to 84–399 (EKVTMQNLND…RLIDGEDGSC (316 aa)). A linker 1 region spans residues 120-141 (YEKFGPGSCRGLDHDYSRYFTV). The interval 142-233 (IDDLRNQIIS…KNHEEEMKAL (92 aa)) is coil 1B. Residues 234–256 (QCAAGGNVNVEMNAAPGVDLTVL) form a linker 12 region. Residues 257 to 395 (LNNMRAEYEA…ETYCRLIDGE (139 aa)) are coil 2. Residues 396 to 460 (DGSCAKSKGY…NVKSEQRVPS (65 aa)) form a tail region. Residues 435-460 (LSSRVHSVEEKSTKVNNVKSEQRVPS) form a disordered region. Positions 448–460 (KVNNVKSEQRVPS) are enriched in polar residues.

This sequence belongs to the intermediate filament family. As to quaternary structure, heterotetramer of two type I and two type II keratins. Interacts with KRT6A to form filaments.

It localises to the cytoplasm. Its function is as follows. Essential for the proper assembly of type I and type II keratin protein complexes and formation of keratin intermediate filaments in the inner root sheath (irs). This Bos taurus (Bovine) protein is Keratin, type I cytoskeletal 27.